A 373-amino-acid polypeptide reads, in one-letter code: Erythronate-4-phosphate dehydrogenase (373 aa).

The substrate site is built by Ser-45 and Thr-66. Residues Asp-146 and Thr-173 each contribute to the NAD(+) site. Arg-206 is an active-site residue. Residue Asp-230 participates in NAD(+) binding. The active site involves Glu-235. His-252 acts as the Proton donor in catalysis. Residue Gly-255 participates in NAD(+) binding. Tyr-256 lines the substrate pocket.

It belongs to the D-isomer specific 2-hydroxyacid dehydrogenase family. PdxB subfamily. As to quaternary structure, homodimer.

Its subcellular location is the cytoplasm. The enzyme catalyses 4-phospho-D-erythronate + NAD(+) = (R)-3-hydroxy-2-oxo-4-phosphooxybutanoate + NADH + H(+). It functions in the pathway cofactor biosynthesis; pyridoxine 5'-phosphate biosynthesis; pyridoxine 5'-phosphate from D-erythrose 4-phosphate: step 2/5. In terms of biological role, catalyzes the oxidation of erythronate-4-phosphate to 3-hydroxy-2-oxo-4-phosphonooxybutanoate. This chain is Erythronate-4-phosphate dehydrogenase, found in Saccharophagus degradans (strain 2-40 / ATCC 43961 / DSM 17024).